Here is a 308-residue protein sequence, read N- to C-terminus: Tetraspanin-12 (308 aa).

The Cytoplasmic segment spans residues 1-41 (MANRRQPVQHRAQQRVYRQSQIRYAPGAGGESEISCCVKYS). Residues 42 to 62 (VFSFNVIFFLLGFGLLLFGVW) traverse the membrane as a helical segment. The Extracellular segment spans residues 63-86 (AQIEKNTFVNMLSKASKLYLDPTW). Residues 87–107 (PLLIVGFLTFIIGFSGCVGSL) traverse the membrane as a helical segment. The Cytoplasmic portion of the chain corresponds to 108–112 (RENTS). The helical transmembrane segment at 113–133 (FLTFYSTLLGLLLIAEFSAGV) threads the bilayer. The Extracellular segment spans residues 134-268 (FAYACRDQLD…PKLQLWLNNN (135 aa)). Asparagine 213 carries an N-linked (GlcNAc...) asparagine glycan. The chain crosses the membrane as a helical span at residues 269–289 (MLLVAVSMVIIAIIQVLGICF). Residues 290–308 (AQNLKSDILAQRAKWYYTH) lie on the Cytoplasmic side of the membrane.

Belongs to the tetraspanin (TM4SF) family. May interact with protease sup-17; the interaction promotes sup-17 cell membrane localization. As to expression, expressed in the germline.

Its subcellular location is the cell membrane. The protein localises to the cytoplasmic vesicle membrane. It localises to the endosome membrane. The protein resides in the early endosome membrane. It is found in the late endosome membrane. Its subcellular location is the recycling endosome membrane. The protein localises to the golgi apparatus. It localises to the trans-Golgi network membrane. Functions redundantly with tsp-14 isoform a to regulate body size, embryonic and vulva development. Functions redundantly with tsp-14 (isoforms a and b) to regulate cell fate specification in the postembryonic mesodermal M lineage and male development. May regulate BMP-like Sma/Mab signaling by mediating protease sup-17 trafficking to the cell surface. Together with tsp-14, functions redundantly to maintain cell surface levels of the BMP type II receptor daf-4 (but not BMP type I receptor sma-6), probably by regulating endosomal sorting of receptors and their targeting to degradative lysosomes. Together with tsp-14 involved in maintaining the structural and functional integrity of the endosomal network. Together with tsp-14, probably acts by modulating the activation of glp-1, a Notch-like receptor, to regulate germline maturation. Probably acts by modulating the activation of lin-12, a Notch-like receptor, to regulate cell fate specification such as the anchor cell/ventral uterine precursor cell decision. The chain is Tetraspanin-12 from Caenorhabditis elegans.